Reading from the N-terminus, the 481-residue chain is uncharacterized protein (481 aa).

The protein belongs to the UbiD family.

This is an uncharacterized protein from Archaeoglobus fulgidus (strain ATCC 49558 / DSM 4304 / JCM 9628 / NBRC 100126 / VC-16).